Here is a 94-residue protein sequence, read N- to C-terminus: Small ribosomal subunit protein uS19 (94 aa).

It belongs to the universal ribosomal protein uS19 family.

Protein S19 forms a complex with S13 that binds strongly to the 16S ribosomal RNA. The protein is Small ribosomal subunit protein uS19 of Anaplasma phagocytophilum (strain HZ).